Consider the following 413-residue polypeptide: uncharacterized protein (413 aa).

The region spanning 3-155 (MEPRVLRREE…SRVRLSVPAG (153 aa)) is the N-acetyltransferase domain. Residues 86–88 (VSV), 94–99 (RRGVLT), and 122–123 (SE) each bind acetyl-CoA. Y127 acts as the Proton donor in catalysis. The active-site Proton acceptor; via carboxylate is the F413.

This sequence belongs to the acetyltransferase Eis family. As to quaternary structure, homohexamer; trimer of dimers.

This is an uncharacterized protein from Streptomyces coelicolor (strain ATCC BAA-471 / A3(2) / M145).